The following is a 530-amino-acid chain: Serendipity locus protein alpha (530 aa).

Transient expression in blastoderm from nuclear cycle 11 to the onset of gastrulation.

It is found in the cytoplasm. Its subcellular location is the cell membrane. Its function is as follows. Required for the cellularization of the syncytial blastoderm embryo. Involved in the localization of the actin filaments just prior to and during plasma membrane invagination. Sry-alpha together with nullo and bnk may provide auxiliary functions, by acting both to stabilize a large and dynamic microfilament structure and regulate its functions. This Drosophila melanogaster (Fruit fly) protein is Serendipity locus protein alpha (Sry-alpha).